A 706-amino-acid polypeptide reads, in one-letter code: Gamma-adducin (706 aa).

Low complexity predominate over residues 1–11 (MSSDTSPAVVT). A disordered region spans residues 1–23 (MSSDTSPAVVTTPPPPSMPHKER). The residue at position 2 (serine 2) is an N-acetylserine. Phosphoserine occurs at positions 31, 42, 64, 402, 414, 423, 442, and 461. Disordered regions lie at residues 471 to 495 (AEDSSKVSSGTPIKIEDPNQFVPLN), 534 to 556 (PPSTMQFDDDDQGPPAPPNPFSH), 574 to 610 (QGLDDAEQGSLSDDAASVSQIQSQTQSPQSVPERLEE), and 651 to 706 (TSTT…KVEA). Residue lysine 484 forms a Glycyl lysine isopeptide (Lys-Gly) (interchain with G-Cter in SUMO2) linkage. Serine 583, serine 585, and serine 590 each carry phosphoserine. Low complexity-rich tracts occupy residues 590 to 605 (SVSQIQSQTQSPQSVP) and 651 to 662 (TSTTIENIEITI). A phosphoserine mark is found at serine 673, serine 677, serine 679, serine 681, and serine 683. Over residues 682 to 706 (PSKKKKKFRTPSFLKKNKKKEKVEA) the composition is skewed to basic residues. The interaction with calmodulin stretch occupies residues 684 to 701 (KKKKKFRTPSFLKKNKKK).

The protein belongs to the aldolase class II family. Adducin subfamily. Heterodimer of an alpha and a gamma subunit. Sumoylated. In terms of processing, proteolytically cleaved by asparagine endopeptidase (AEP) into 2 fragments. Overexpression of the 1-357 fragment induces neuronal apoptosis, and overexpression of either 1-357 or 358-706 fragment increases the degeneration of dendritic spines. Overexpression of the 1-357 fragment impairs neurite outgrowth by downregulating the expression of Rac2, and induces synaptic dysfunction and cognitive impairments in tau P301S transgenic mice, a mouse model for Alzheimer disease (AD). Cleavage fragment 1-357 is expressed in the brain and the expression increases with age (at protein level). The fragment is expressed in the cortex, hippocampal CA1 region and hippocampal dentate gyrus in tau P301S transgenic mice, a mouse model for Alzheimer disease (AD) (at protein level). The fragment is only weakly expressed in non-transgenic mouse brain sections (at protein level).

It is found in the cytoplasm. It localises to the cytoskeleton. The protein localises to the cell membrane. Its function is as follows. Membrane-cytoskeleton-associated protein that promotes the assembly of the spectrin-actin network. Plays a role in actin filament capping. Binds to calmodulin. Involved in myogenic reactivity of the renal afferent arteriole (Af-art), renal interlobular arteries and middle cerebral artery (MCA) to increased perfusion pressure. Involved in regulation of potassium channels in the vascular smooth muscle cells (VSMCs) of the Af-art and MCA ex vivo. Involved in regulation of glomerular capillary pressure, glomerular filtration rate (GFR) and glomerular nephrin expression in response to hypertension. Involved in renal blood flow (RBF) autoregulation. Plays a role in podocyte structure and function. Regulates globular monomer actin (G-actin) and filamentous polymer actin (F-actin) ratios in the primary podocytes affecting actin cytoskeleton organization. Regulates expression of synaptopodin, RhoA, Rac1 and CDC42 in the renal cortex and the primary podocytes. Regulates expression of nephrin in the glomeruli and in the primary podocytes, expression of nephrin and podocinin in the renal cortex, and expression of focal adhesion proteins integrin alpha-3 and integrin beta-1 in the glomeruli. Involved in cell migration and cell adhesion of podocytes, and in podocyte foot process effacement. Regulates expression of profibrotics markers MMP2, MMP9, TGF beta-1, tubular tight junction protein E-cadherin, and mesenchymal markers vimentin and alpha-SMA. Promotes the growth of neurites. The chain is Gamma-adducin (Add3) from Mus musculus (Mouse).